The following is a 412-amino-acid chain: Multidrug resistance protein MdtG (412 aa).

11 helical membrane-spanning segments follow: residues leucine 19–valine 39, leucine 56–alanine 76, leucine 90–leucine 110, alanine 113–isoleucine 133, threonine 144–alanine 164, threonine 171–isoleucine 191, leucine 222–leucine 242, isoleucine 254–proline 274, isoleucine 288–threonine 308, phenylalanine 317–asparagine 337, and alanine 376–leucine 396.

It belongs to the major facilitator superfamily. DHA1 family. MdtG (TC 2.A.1.2.20) subfamily.

The protein localises to the cell inner membrane. The polypeptide is Multidrug resistance protein MdtG (Klebsiella pneumoniae (strain 342)).